We begin with the raw amino-acid sequence, 212 residues long: Imidazole glycerol phosphate synthase subunit HisH (212 aa).

The 211-residue stretch at 2–212 (QTAIIDYGMG…LTMLKNFLNW (211 aa)) folds into the Glutamine amidotransferase type-1 domain. Residue cysteine 85 is the Nucleophile of the active site. Catalysis depends on residues histidine 194 and glutamate 196.

In terms of assembly, heterodimer of HisH and HisF.

Its subcellular location is the cytoplasm. The catalysed reaction is 5-[(5-phospho-1-deoxy-D-ribulos-1-ylimino)methylamino]-1-(5-phospho-beta-D-ribosyl)imidazole-4-carboxamide + L-glutamine = D-erythro-1-(imidazol-4-yl)glycerol 3-phosphate + 5-amino-1-(5-phospho-beta-D-ribosyl)imidazole-4-carboxamide + L-glutamate + H(+). The enzyme catalyses L-glutamine + H2O = L-glutamate + NH4(+). Its pathway is amino-acid biosynthesis; L-histidine biosynthesis; L-histidine from 5-phospho-alpha-D-ribose 1-diphosphate: step 5/9. Its function is as follows. IGPS catalyzes the conversion of PRFAR and glutamine to IGP, AICAR and glutamate. The HisH subunit catalyzes the hydrolysis of glutamine to glutamate and ammonia as part of the synthesis of IGP and AICAR. The resulting ammonia molecule is channeled to the active site of HisF. This Neisseria gonorrhoeae (strain ATCC 700825 / FA 1090) protein is Imidazole glycerol phosphate synthase subunit HisH.